Here is a 338-residue protein sequence, read N- to C-terminus: Anthranilate phosphoribosyltransferase (338 aa).

Residues G80, 83–84 (GD), T88, 90–93 (NIST), 108–116 (KHGNRAMSS), and S120 each bind 5-phospho-alpha-D-ribose 1-diphosphate. Residue G80 coordinates anthranilate. S92 serves as a coordination point for Mg(2+). Anthranilate is bound at residue N111. R166 lines the anthranilate pocket. Residues D225 and E226 each contribute to the Mg(2+) site.

Belongs to the anthranilate phosphoribosyltransferase family. In terms of assembly, homodimer. Mg(2+) is required as a cofactor.

The catalysed reaction is N-(5-phospho-beta-D-ribosyl)anthranilate + diphosphate = 5-phospho-alpha-D-ribose 1-diphosphate + anthranilate. Its pathway is amino-acid biosynthesis; L-tryptophan biosynthesis; L-tryptophan from chorismate: step 2/5. In terms of biological role, catalyzes the transfer of the phosphoribosyl group of 5-phosphorylribose-1-pyrophosphate (PRPP) to anthranilate to yield N-(5'-phosphoribosyl)-anthranilate (PRA). The sequence is that of Anthranilate phosphoribosyltransferase from Herpetosiphon aurantiacus (strain ATCC 23779 / DSM 785 / 114-95).